The sequence spans 148 residues: Large ribosomal subunit protein eL19 (148 aa).

Basic residues predominate over residues 52–76 (KPKKGISSYRSKKIAQQKKKGRRRG). The disordered stretch occupies residues 52–95 (KPKKGISSYRSKKIAQQKKKGRRRGPGSIKGAKGARRPKKDEWM).

Belongs to the eukaryotic ribosomal protein eL19 family. In terms of assembly, part of the 50S ribosomal subunit.

Binds to the 23S rRNA. This is Large ribosomal subunit protein eL19 from Methanothermobacter thermautotrophicus (strain ATCC 29096 / DSM 1053 / JCM 10044 / NBRC 100330 / Delta H) (Methanobacterium thermoautotrophicum).